The primary structure comprises 411 residues: Citrate synthase (411 aa).

Residues His-304 and Asp-363 contribute to the active site.

Belongs to the citrate synthase family.

It catalyses the reaction oxaloacetate + acetyl-CoA + H2O = citrate + CoA + H(+). It functions in the pathway carbohydrate metabolism; tricarboxylic acid cycle; isocitrate from oxaloacetate: step 1/2. The chain is Citrate synthase (gltA) from Rickettsia australis.